The sequence spans 812 residues: Plasminogen (812 aa).

The N-terminal stretch at 1 to 19 (MDHKEIILLFLLFLKPGQG) is a signal peptide. The PAN domain occupies 20–98 (DSLDGYVSTQ…RDVILFEKRV (79 aa)). Disulfide bonds link Cys49–Cys73, Cys53–Cys61, Cys103–Cys181, Cys124–Cys164, Cys152–Cys176, Cys185–Cys262, Cys188–Cys316, Cys206–Cys245, Cys234–Cys257, Cys275–Cys352, Cys296–Cys335, Cys324–Cys347, Cys376–Cys454, Cys397–Cys437, Cys425–Cys449, Cys481–Cys560, Cys502–Cys543, Cys531–Cys555, Cys568–Cys687, Cys578–Cys586, and Cys609–Cys625. Kringle domains follow at residues 102–181 (ECKT…IPEC), 184–262 (ECMY…IPRC), 274–352 (QCLK…IPSC), 375–454 (ECYQ…LKRC), and 480–560 (DCMY…IPLC). In terms of domain architecture, Peptidase S1 spans 582–810 (VVGGCVANPH…YVNWIEREMR (229 aa)). A Phosphoserine modification is found at Ser598. Active-site charge relay system residues include His624 and Asp667. Ser690 carries the post-translational modification Phosphoserine. 3 disulfide bridges follow: Cys701–Cys768, Cys731–Cys747, and Cys758–Cys786. Ser762 serves as the catalytic Charge relay system.

The protein belongs to the peptidase S1 family. Plasminogen subfamily. Interacts (both mature PLG and the angiostatin peptide) with AMOT and CSPG4. Interacts (via the Kringle domains) with HRG; the interaction tethers PLG to the cell surface and enhances its activation. Interacts (via Kringle 4 domain) with ADA; the interaction stimulates PLG activation when in complex with DPP4. Angiostatin: Interacts with ATP5F1A; the interaction inhibits most of the angiogenic effects of angiostatin. In the presence of the inhibitor, the activation involves only cleavage after Arg-581, yielding two chains held together by two disulfide bonds. In the absence of the inhibitor, the activation involves additionally the removal of the activation peptide.

It localises to the secreted. The catalysed reaction is Preferential cleavage: Lys-|-Xaa &gt; Arg-|-Xaa, higher selectivity than trypsin. Converts fibrin into soluble products.. With respect to regulation, converted into plasmin by plasminogen activators, both plasminogen and its activator being bound to fibrin. Cannot be activated with streptokinase. In terms of biological role, plasmin dissolves the fibrin of blood clots and acts as a proteolytic factor in a variety of other processes including embryonic development, tissue remodeling, tumor invasion, and inflammation. In ovulation, weakens the walls of the Graafian follicle. It activates the urokinase-type plasminogen activator, collagenases and several complement zymogens, such as C1, C4 and C5. Cleavage of fibronectin and laminin leads to cell detachment and apoptosis. Also cleaves fibrin, thrombospondin and von Willebrand factor. Its role in tissue remodeling and tumor invasion may be modulated by CSPG4. Binds to cells. Angiostatin is an angiogenesis inhibitor that blocks neovascularization and growth of experimental primary and metastatic tumors in vivo. This chain is Plasminogen (Plg), found in Rattus norvegicus (Rat).